Here is a 2066-residue protein sequence, read N- to C-terminus: Kinesin-like protein KIN-12C (2066 aa).

2 disordered regions span residues M1–Q41 and R59–L116. Positions S20–S33 are enriched in low complexity. Positions G67 to E76 are enriched in basic and acidic residues. Residues E99–R109 show a composition bias toward polar residues. A Kinesin motor domain is found at N168–I505. G249–T256 is a binding site for ATP. 3 microtubules-binding regions span residues S375–H379, V406–E412, and H454–R458. 2 coiled-coil regions span residues D1521–I1618 and K1650–L1772. Disordered stretches follow at residues S1803–S1823 and K2043–R2066. A coiled-coil region spans residues V1905–H2051. Over residues T2047–R2066 the composition is skewed to polar residues.

Belongs to the TRAFAC class myosin-kinesin ATPase superfamily. Kinesin family. KIN-12 subfamily. Interacts with TAN. Interacts with RANGAP1. Expressed in tissues enriched in dividing cells, such as root meristems, root primordia, and leaf primordia/young leaves.

The protein localises to the cytoplasm. It localises to the cytoskeleton. The protein resides in the phragmoplast. Involved in the spatial control of cytokinesis by a proper phragmoplast guidance. Localizes TAN to the cortical division sites (CDS) during cytokinesis via direct binding. In Arabidopsis thaliana (Mouse-ear cress), this protein is Kinesin-like protein KIN-12C.